Consider the following 1044-residue polypeptide: Probable pre-mRNA-splicing factor ATP-dependent RNA helicase DEAH6 (1044 aa).

2 disordered regions span residues 99–134 (EADH…SEQL) and 152–211 (RRKV…VRRD). The segment covering 157 to 167 (EDEDDGTESEE) has biased composition (acidic residues). Positions 168–211 (ERLRDQREREELEQHLRERDTARTRKLTEPKMSKKEQEEFVRRD) are enriched in basic and acidic residues. One can recognise a Helicase ATP-binding domain in the interval 414 to 577 (LNAVKDHQVL…FDQAPIFRFP (164 aa)). Residue 427-434 (GETGSGKT) coordinates ATP. The DEAH box motif lies at 524–527 (DEAH). The region spanning 599–775 (AITTVLTIHV…SVVLSLKSLG (177 aa)) is the Helicase C-terminal domain.

The protein belongs to the DEAD box helicase family. DEAH subfamily. PRP2 sub-subfamily. In terms of tissue distribution, predominantly expressed in flowers.

The catalysed reaction is ATP + H2O = ADP + phosphate + H(+). Its function is as follows. May be involved in pre-mRNA splicing. This Arabidopsis thaliana (Mouse-ear cress) protein is Probable pre-mRNA-splicing factor ATP-dependent RNA helicase DEAH6.